The following is a 165-amino-acid chain: Thiol peroxidase (165 aa).

Residues 17 to 165 form the Thioredoxin domain; that stretch reads PQVGEIVENF…NYEAALAVLA (149 aa). C59 serves as the catalytic Cysteine sulfenic acid (-SOH) intermediate. The cysteines at positions 59 and 93 are disulfide-linked.

Belongs to the peroxiredoxin family. Tpx subfamily. As to quaternary structure, homodimer.

It catalyses the reaction a hydroperoxide + [thioredoxin]-dithiol = an alcohol + [thioredoxin]-disulfide + H2O. In terms of biological role, thiol-specific peroxidase that catalyzes the reduction of hydrogen peroxide and organic hydroperoxides to water and alcohols, respectively. Plays a role in cell protection against oxidative stress by detoxifying peroxides. The protein is Thiol peroxidase of Haemophilus influenzae (strain ATCC 51907 / DSM 11121 / KW20 / Rd).